A 527-amino-acid polypeptide reads, in one-letter code: Phosphoenolpyruvate carboxykinase (ATP) (527 aa).

Positions 54, 190, and 196 each coordinate substrate. ATP contacts are provided by residues lysine 196, histidine 215, and 231–239; that span reads GLSGTGKTT. Residues lysine 196 and histidine 215 each coordinate Mn(2+). Aspartate 252 is a binding site for Mn(2+). Residues glutamate 280, arginine 317, 436–437, and threonine 442 each bind ATP; that span reads RI. Arginine 317 is a binding site for substrate.

The protein belongs to the phosphoenolpyruvate carboxykinase (ATP) family. Mn(2+) serves as cofactor.

The protein resides in the cytoplasm. It catalyses the reaction oxaloacetate + ATP = phosphoenolpyruvate + ADP + CO2. The protein operates within carbohydrate biosynthesis; gluconeogenesis. Involved in the gluconeogenesis. Catalyzes the conversion of oxaloacetate (OAA) to phosphoenolpyruvate (PEP) through direct phosphoryl transfer between the nucleoside triphosphate and OAA. The chain is Phosphoenolpyruvate carboxykinase (ATP) from Oceanobacillus iheyensis (strain DSM 14371 / CIP 107618 / JCM 11309 / KCTC 3954 / HTE831).